The sequence spans 706 residues: DNA helicase/primase complex-associated protein (706 aa).

The tract at residues 203–249 (CPGGDGGEEGDGAEGGDGGVGGAGDGAGAGGGSSGKPPAGKRGRPTR) is disordered. Residues 217 to 236 (GGDGGVGGAGDGAGAGGGSS) are compositionally biased toward gly residues.

Belongs to the herpesviridae HEPA family. As to quaternary structure, associates with the primase and the helicase to form the helicase-primase complex. Interacts with the origin-binding protein. Interacts with the polymerase catalytic subunit.

The protein localises to the host nucleus. Component of the helicase/primase complex. Unwinds the DNA at the replication forks and generates single-stranded DNA for both leading and lagging strand synthesis. The primase synthesizes short RNA primers on the lagging strand that the polymerase presumably elongates using dNTPs. The primase-associated factor has no known catalytic activity in the complex and may serve to facilitate the formation of the replisome by directly interacting with the origin-binding protein and the polymerase. This Equus caballus (Horse) protein is DNA helicase/primase complex-associated protein (40).